Reading from the N-terminus, the 342-residue chain is Trans-3-hydroxy-L-proline dehydratase (342 aa).

The active-site Proton acceptor is the Ser90. Residues 91–92 (GS), Asp251, and 256–257 (GT) each bind substrate.

The protein belongs to the proline racemase family.

The enzyme catalyses trans-3-hydroxy-L-proline = 1-pyrroline-2-carboxylate + H2O. Its function is as follows. Catalyzes the dehydration of trans-3-hydroxy-L-proline (t3LHyp) to Delta(1)-pyrroline-2-carboxylate (Pyr2C). Displays neither proline racemase activity nor 4-hydroxyproline 2-epimerase activity. In Brucella suis biovar 1 (strain 1330), this protein is Trans-3-hydroxy-L-proline dehydratase.